The sequence spans 366 residues: Envelope glycoprotein M (366 aa).

Over 1-17 (MMKASRSDTFMLRTWIQ) the chain is Intravirion. The helical transmembrane segment at 18-38 (LLVLFVIMFIMSAILPIAASV) threads the bilayer. Over 39-83 (EGLGFPCYFPNLVDYSLLNLTLRNAAKHLTPTLFLEAPELFVYIT) the chain is Virion surface. Residues 84 to 104 (WSVLVDLASAIYYVVGALAIL) form a helical membrane-spanning segment. The Intravirion segment spans residues 105-113 (QARKTHLTS). Residues 114-134 (MITLQTWINLVGSHTMLFIGI) form a helical membrane-spanning segment. The Virion surface portion of the chain corresponds to 135–153 (ARMWTLQLFIHVLSYKHVM). A helical transmembrane segment spans residues 154–174 (LAAFIYFLHFCLSYMHTLSLV). Topologically, residues 175–209 (SRNSPKWSVLLMEQHIPKQSLLSTILDYGKPLCVN) are intravirion. The helical transmembrane segment at 210-230 (MYLSLLALEMLVFSLGFMMAI) threads the bilayer. Residues 231–235 (GNSFY) are Virion surface-facing. Residues 236 to 256 (ILVSDTVLASINLYFVLTTFW) traverse the membrane as a helical segment. Over 257-269 (YMMTEMFLQDYLK) the chain is Intravirion. Residues 270 to 290 (LQFGFYLGVFSGSLILLLPVL) form a helical membrane-spanning segment. Residues 291 to 304 (RYEAVFVSANLHKT) are Virion surface-facing. The chain crosses the membrane as a helical span at residues 305–325 (VAVNIAMIPAMCVIAMMFRLF). Topologically, residues 326–366 (RYSQQVRKPENSYTPLPKRFKKRRQKQDQQLIMVETSDEEL) are intravirion.

Belongs to the herpesviridae glycoprotein M family. As to quaternary structure, interacts (via N-terminus) with gN (via N-terminus). The gM-gN heterodimer forms the gCII complex.

It is found in the virion membrane. Its subcellular location is the host Golgi apparatus. The protein localises to the host trans-Golgi network. It localises to the host endosome membrane. The protein resides in the host nucleus inner membrane. In terms of biological role, envelope glycoprotein important for virion assembly and egress. Plays a role in the correct incorporation of gH-gL into virion membrane. Directs the glycoprotein N (gN) to the host trans-Golgi network. The polypeptide is Envelope glycoprotein M (Saimiri sciureus (Common squirrel monkey)).